A 143-amino-acid chain; its full sequence is Nucleoside diphosphate kinase (143 aa).

6 residues coordinate ATP: Lys11, Phe59, Arg87, Thr93, Arg104, and Asn114. The active-site Pros-phosphohistidine intermediate is the His117.

Belongs to the NDK family. As to quaternary structure, homotetramer. It depends on Mg(2+) as a cofactor.

The protein resides in the cytoplasm. The enzyme catalyses a 2'-deoxyribonucleoside 5'-diphosphate + ATP = a 2'-deoxyribonucleoside 5'-triphosphate + ADP. The catalysed reaction is a ribonucleoside 5'-diphosphate + ATP = a ribonucleoside 5'-triphosphate + ADP. In terms of biological role, major role in the synthesis of nucleoside triphosphates other than ATP. The ATP gamma phosphate is transferred to the NDP beta phosphate via a ping-pong mechanism, using a phosphorylated active-site intermediate. The protein is Nucleoside diphosphate kinase of Shewanella baltica (strain OS223).